Reading from the N-terminus, the 208-residue chain is N-(5'-phosphoribosyl)anthranilate isomerase (208 aa).

It belongs to the TrpF family.

It catalyses the reaction N-(5-phospho-beta-D-ribosyl)anthranilate = 1-(2-carboxyphenylamino)-1-deoxy-D-ribulose 5-phosphate. It participates in amino-acid biosynthesis; L-tryptophan biosynthesis; L-tryptophan from chorismate: step 3/5. In Priestia megaterium (strain ATCC 12872 / QMB1551) (Bacillus megaterium), this protein is N-(5'-phosphoribosyl)anthranilate isomerase (trpF).